The following is an 89-amino-acid chain: Calsenilin isoform 4 (89 aa).

The segment at 27–57 (SSRDAEDQGSREGIGWQPPGRSWAHTTEQEG) is disordered.

Isoform 1 or isoform 4 (T+ forms) are expressed at equal levels with isoform 2 or isoform 3 (T- forms) in brain.

Functionally, unknown for isoform 4. Csen is involved in calcium-dependent transcriptional repression, regulation of potassium channels, and perhaps in processing of PSEN2 and apoptosis. The chain is Calsenilin isoform 4 (Kcnip3) from Mus musculus (Mouse).